Consider the following 322-residue polypeptide: MTNQTVSPLFPHRHLLGIKGLSPLDILCLLDLADQEIAVSRQPEKKKSVLRGRTQINLFFEASTRTQSSFELAGKRLGADVMNMSVGNSSVKKGETLIDTAMTLNAMQPDILVIRHASAGAAALLAQKVGCSVVNAGDGAHEHPTQALLDALTIRRAKGQIENLIVAICGDVLHSRVARSNILLLNALGARVRVVAPSTLLPAGMADMSVEVFNSMEEGLKDADVVMMLRLQRERMAGSFVPSVREYFHFYGLDREKLKFAKPDALVMHPGPMNRGVEIASDVADGPQSVIQQQVEMGVAVRMAVMEALLDPRRNPGNGEPA.

Carbamoyl phosphate is bound by residues Arg-65 and Thr-66. Position 93 (Lys-93) interacts with L-aspartate. Arg-115, His-143, and Gln-146 together coordinate carbamoyl phosphate. Positions 176 and 230 each coordinate L-aspartate. Carbamoyl phosphate-binding residues include Gly-271 and Pro-272.

The protein belongs to the aspartate/ornithine carbamoyltransferase superfamily. ATCase family. Heterododecamer (2C3:3R2) of six catalytic PyrB chains organized as two trimers (C3), and six regulatory PyrI chains organized as three dimers (R2).

It carries out the reaction carbamoyl phosphate + L-aspartate = N-carbamoyl-L-aspartate + phosphate + H(+). The protein operates within pyrimidine metabolism; UMP biosynthesis via de novo pathway; (S)-dihydroorotate from bicarbonate: step 2/3. In terms of biological role, catalyzes the condensation of carbamoyl phosphate and aspartate to form carbamoyl aspartate and inorganic phosphate, the committed step in the de novo pyrimidine nucleotide biosynthesis pathway. This chain is Aspartate carbamoyltransferase catalytic subunit, found in Brucella abortus (strain S19).